The following is a 349-amino-acid chain: UDP-3-O-acylglucosamine N-acyltransferase (349 aa).

Catalysis depends on histidine 246, which acts as the Proton acceptor.

Belongs to the transferase hexapeptide repeat family. LpxD subfamily. In terms of assembly, homotrimer.

The catalysed reaction is a UDP-3-O-[(3R)-3-hydroxyacyl]-alpha-D-glucosamine + a (3R)-hydroxyacyl-[ACP] = a UDP-2-N,3-O-bis[(3R)-3-hydroxyacyl]-alpha-D-glucosamine + holo-[ACP] + H(+). Its pathway is bacterial outer membrane biogenesis; LPS lipid A biosynthesis. Functionally, catalyzes the N-acylation of UDP-3-O-acylglucosamine using 3-hydroxyacyl-ACP as the acyl donor. Is involved in the biosynthesis of lipid A, a phosphorylated glycolipid that anchors the lipopolysaccharide to the outer membrane of the cell. In Nostoc sp. (strain PCC 7120 / SAG 25.82 / UTEX 2576), this protein is UDP-3-O-acylglucosamine N-acyltransferase.